Consider the following 233-residue polypeptide: Putative N-acetylmannosamine-6-phosphate 2-epimerase (233 aa).

It belongs to the NanE family.

The catalysed reaction is an N-acyl-D-glucosamine 6-phosphate = an N-acyl-D-mannosamine 6-phosphate. Its pathway is amino-sugar metabolism; N-acetylneuraminate degradation; D-fructose 6-phosphate from N-acetylneuraminate: step 3/5. Converts N-acetylmannosamine-6-phosphate (ManNAc-6-P) to N-acetylglucosamine-6-phosphate (GlcNAc-6-P). This Yersinia pseudotuberculosis serotype O:3 (strain YPIII) protein is Putative N-acetylmannosamine-6-phosphate 2-epimerase.